Consider the following 273-residue polypeptide: Gamma-glutamyl cyclotransferase gliK (273 aa).

A helical transmembrane segment spans residues 227 to 243 (WLGWIILTLYGLMWSYH).

Belongs to the class-I pyridoxal-phosphate-dependent aminotransferase family.

It is found in the membrane. It carries out the reaction an alpha-(gamma-L-glutamyl)-L-amino acid = 5-oxo-L-proline + an L-alpha-amino acid. The protein operates within mycotoxin biosynthesis. Functionally, gamma-glutamyl cyclotransferase-like protein; part of the gene cluster that mediates the biosynthesis of gliotoxin, a member of the epipolythiodioxopiperazine (ETP) class of toxins characterized by a disulfide bridged cyclic dipeptide. The first step in gliotoxin biosynthesis is the condensation of serine and phenylalanine to form the cyclo-L-phenylalanyl-L-serine diketopiperazine (DKP) by the NRPS gliP. GliP is also able to produce the DKP cyclo-L-tryptophanyl-L-serine, suggesting that the substrate specificity of the first adenylation (A) domain in gliP is sufficiently relaxed to accommodate both L-Phe and L-Trp. The cytochrome P450 monooxygenase gliC has been shown to catalyze the subsequent hydroxylation of the alpha-carbon of L-Phe in cyclo-L-phenylalanyl-L-serine whereas the second cytochrome P450 enzyme, gliF, is presumably involved in the modification of the DKP side chain. The glutathione S-transferase (GST) gliG then forms a bis-glutathionylated biosynthetic intermediate which is responsible for the sulfurization of gliotoxin. This bis-glutathionylated intermediate is subsequently processed by the gamma-glutamyl cyclotransferase gliK to remove both gamma-glutamyl moieties. Subsequent processing via gliI yields a biosynthetic intermediate, which is N-methylated via the N-methyltransferase gliN, before the gliotoxin oxidoreductase gliT-mediated disulfide bridge closure. GliN-mediated amide methylation confers stability to ETP, damping the spontaneous formation of tri- and tetrasulfides. Intracellular dithiol gliotoxin oxidized by gliT is subsequently effluxed by gliA. Gliotoxin contributes to pathogenesis during invasive aspergillosis. In macrophages and neutrophils, gliotoxin showed inhibition of various different cell functions including cytokine production, antigen presentation, phagocytosis, and production of reactive oxygen species. The protein is Gamma-glutamyl cyclotransferase gliK of Aspergillus fumigatus (strain ATCC MYA-4609 / CBS 101355 / FGSC A1100 / Af293) (Neosartorya fumigata).